A 387-amino-acid polypeptide reads, in one-letter code: Zinc homeostasis factor 1 (387 aa).

4 consecutive transmembrane segments (helical) span residues 10-30 (IILL…TGYA), 34-54 (LALI…LVAL), 77-97 (EILG…FIFM), and 113-133 (TLMF…IFLF). Residues 195 to 214 (SYTGNHNGAGTSKPVNNHGS) show a composition bias toward polar residues. Residues 195–221 (SYTGNHNGAGTSKPVNNHGSIEQDAPK) form a disordered region. A run of 2 helical transmembrane segments spans residues 234–254 (FLHV…ALFI) and 263–283 (FLFD…SAIP).

It belongs to the cation diffusion facilitator (CDF) transporter (TC 2.A.4) family. SLC30A subfamily.

The protein localises to the endoplasmic reticulum membrane. The protein resides in the nucleus membrane. In terms of biological role, involved in zinc homeostasis, where it plays a role in its accumulation in the endoplasmic reticulum/nucleus. Also has a role in the sequestration of cadmium into the endoplasmic reticulum. This is Zinc homeostasis factor 1 (zhf1) from Schizosaccharomyces pombe (strain 972 / ATCC 24843) (Fission yeast).